The chain runs to 934 residues: MTKNKKEFTEAPVNFGANLGLMLDLYDDYLQDPSSVPEDLQVLFSTIKTGEAHIEAKPTTDGGGSQAGDSTIKRVMRLIDNIRQYGHLKADIYPVNPPERQNVPKLEIEDFDLDKETLEKISSGIVSEHFKDIYDNAYDAIVRMERRYKGPIAFEYTHINNNKERVWLKRRIETPYKASLNDNQKKELFKKLAHVEGFEKYLHKNFVGAKRFSIEGVDTLVPMLQHTITLAGNEGIKNIQIGMAHRGRLNVLTHVLEKPYEMMISEFMHTDPMKFLPEDGSLELTSGWTSDVKYHLGGVKTTNSYGIEQRISLANNPSHLEIVAPVVAGKTRAAQDNTHQVGGPSTDFHKAMPIIIHGDAAYPGQGINFETMNLGSLKGYSTGGSLHIITNNRIGFTTEPFDGRSTTYSSDVAKGYDVPILHVNADDVEATIEAIEIAMEFRKEFHKDVVIDLVGYRRYGHNEMDEPSITNPVPYQNIRKHDSVEILYGKKLVDEGIISEDEMNEVIDSVQKEMRTAHDKIDKNDKMNNPDMEKPESLQLPLQSDTKDFSFDHLKEINDAMLDYPKDFHVLKKLNKVLEKRREPFEKEGGLVDWAQAEQLAFATILQDGTSIRLTGQDSERGTFSHRHAVLHDEENGNTFTPLHHVPQQQATFDIHNSPLSEAAVVGFEYGYNVENKGNFNIWEAQYGDFSNMSQMMFDNFLSSSRAKWGERSGLTLFLPHAFEGQGPEHSSARLERFLQLAAENNSTVVNLSSASNYFHLLRAQAASLDTLEMRPLIVMSPKSLLRNKTVAKPIDEFTSGGFKPIITEDIDEQKVKKVILASGKMYIDLKEYLAKNPNDSILLIAVERLYPFPEEEIKEVLKSLPHLENVSWVQEEPKNQGAWLFVYPYLKALVANKYDLTYHGRIQRAAPAEGDGEIHKLVQTKIIESSINN.

The protein belongs to the alpha-ketoglutarate dehydrogenase family. Homodimer. Part of the 2-oxoglutarate dehydrogenase (OGDH) complex composed of E1 (2-oxoglutarate dehydrogenase), E2 (dihydrolipoamide succinyltransferase) and E3 (dihydrolipoamide dehydrogenase); the complex contains multiple copies of the three enzymatic components (E1, E2 and E3). The cofactor is thiamine diphosphate.

It catalyses the reaction N(6)-[(R)-lipoyl]-L-lysyl-[protein] + 2-oxoglutarate + H(+) = N(6)-[(R)-S(8)-succinyldihydrolipoyl]-L-lysyl-[protein] + CO2. Its function is as follows. E1 component of the 2-oxoglutarate dehydrogenase (OGDH) complex which catalyzes the decarboxylation of 2-oxoglutarate, the first step in the conversion of 2-oxoglutarate to succinyl-CoA and CO(2). The chain is 2-oxoglutarate dehydrogenase E1 component from Staphylococcus epidermidis (strain ATCC 35984 / DSM 28319 / BCRC 17069 / CCUG 31568 / BM 3577 / RP62A).